Consider the following 54-residue polypeptide: Anti-adapter protein SpxO (54 aa).

In terms of assembly, interacts with SpxH.

Inhibitor of Spx proteolytic control. Acts by interacting with SpxH/YjbH, which disrupts interaction between SpxH and Spx, and inhibits SpxH-enhanced proteolysis of Spx by ClpXP. Required for the stabilization of Spx and activation of Spx-regulated genes in response to cell wall stress. In Bacillus subtilis (strain 168), this protein is Anti-adapter protein SpxO.